Reading from the N-terminus, the 506-residue chain is Glutamate--tRNA ligase (506 aa).

Positions 23 to 33 (PSPTGTPHVGL) match the 'HIGH' region motif. Positions 267-271 (KLSKR) match the 'KMSKS' region motif. Lys270 lines the ATP pocket.

It belongs to the class-I aminoacyl-tRNA synthetase family. Glutamate--tRNA ligase type 1 subfamily. Monomer.

It is found in the cytoplasm. It carries out the reaction tRNA(Glu) + L-glutamate + ATP = L-glutamyl-tRNA(Glu) + AMP + diphosphate. Functionally, catalyzes the attachment of glutamate to tRNA(Glu) in a two-step reaction: glutamate is first activated by ATP to form Glu-AMP and then transferred to the acceptor end of tRNA(Glu). This is Glutamate--tRNA ligase from Clavibacter sepedonicus (Clavibacter michiganensis subsp. sepedonicus).